Consider the following 330-residue polypeptide: Glucan endo-1,3-beta-glucosidase GIII (330 aa).

A signal peptide spans 1–25 (MARKGVDVAVALVLVALAAFPAVHS). E117 functions as the Proton donor in the catalytic mechanism. The Nucleophile role is filled by E255.

The protein belongs to the glycosyl hydrolase 17 family.

The enzyme catalyses Hydrolysis of (1-&gt;3)-beta-D-glucosidic linkages in (1-&gt;3)-beta-D-glucans.. May provide a degree of protection against microbial invasion of germinated barley grain through its ability to degrade fungal cell wall polysaccharides. The sequence is that of Glucan endo-1,3-beta-glucosidase GIII from Hordeum vulgare (Barley).